Reading from the N-terminus, the 181-residue chain is Large ribosomal subunit protein bL19 (181 aa).

Positions 162 to 173 are enriched in basic and acidic residues; the sequence is EKKAAAEAEAAK. A disordered region spans residues 162–181; sequence EKKAAAEAEAAKAAEATPAE.

Belongs to the bacterial ribosomal protein bL19 family.

Its function is as follows. This protein is located at the 30S-50S ribosomal subunit interface and may play a role in the structure and function of the aminoacyl-tRNA binding site. The sequence is that of Large ribosomal subunit protein bL19 from Mesorhizobium japonicum (strain LMG 29417 / CECT 9101 / MAFF 303099) (Mesorhizobium loti (strain MAFF 303099)).